Reading from the N-terminus, the 556-residue chain is 2-succinyl-5-enolpyruvyl-6-hydroxy-3-cyclohexene-1-carboxylate synthase (556 aa).

The protein belongs to the TPP enzyme family. MenD subfamily. Homodimer. Mg(2+) is required as a cofactor. It depends on Mn(2+) as a cofactor. Requires thiamine diphosphate as cofactor.

It catalyses the reaction isochorismate + 2-oxoglutarate + H(+) = 5-enolpyruvoyl-6-hydroxy-2-succinyl-cyclohex-3-ene-1-carboxylate + CO2. It functions in the pathway quinol/quinone metabolism; 1,4-dihydroxy-2-naphthoate biosynthesis; 1,4-dihydroxy-2-naphthoate from chorismate: step 2/7. It participates in quinol/quinone metabolism; menaquinone biosynthesis. Functionally, catalyzes the thiamine diphosphate-dependent decarboxylation of 2-oxoglutarate and the subsequent addition of the resulting succinic semialdehyde-thiamine pyrophosphate anion to isochorismate to yield 2-succinyl-5-enolpyruvyl-6-hydroxy-3-cyclohexene-1-carboxylate (SEPHCHC). This is 2-succinyl-5-enolpyruvyl-6-hydroxy-3-cyclohexene-1-carboxylate synthase from Salmonella paratyphi B (strain ATCC BAA-1250 / SPB7).